The following is a 611-amino-acid chain: mRNA export factor GLE1 (611 aa).

Disordered stretches follow at residues 69–94 (SEDE…SQIC) and 220–243 (KIRS…EKIR). Positions 71–89 (DEMESDEGEESDDEEEEED) are enriched in acidic residues.

It belongs to the GLE1 family. Part of the nuclear pore complex (NPC). The NPC has an eight-fold symmetrical structure comprising a central transport channel and two rings, the cytoplasmic and nuclear rings, to which eight filaments are attached. The cytoplasmic filaments have loose ends, while the nuclear filaments are joined in a distal ring, forming a nuclear basket. NPCs are highly dynamic in configuration and composition, and can be devided in 3 subcomplexes, the NUP62 subcomplex, the NUP107-160 subcomplex and the NUP93 subcomplex, containing approximately 30 different nucleoporin proteins.

It localises to the nucleus envelope. The protein resides in the nucleus. The protein localises to the nuclear pore complex. Required for seed viability. This chain is mRNA export factor GLE1, found in Arabidopsis thaliana (Mouse-ear cress).